The primary structure comprises 225 residues: UPF0758 protein Swoo_4561 (225 aa).

The MPN domain maps to 102-224; sequence ILSDPDLTRD…IVSFAERGWI (123 aa). Zn(2+)-binding residues include His173, His175, and Asp186. The JAMM motif signature appears at 173–186; that stretch reads HNHPSGVAEPSHAD.

The protein belongs to the UPF0758 family.

The sequence is that of UPF0758 protein Swoo_4561 from Shewanella woodyi (strain ATCC 51908 / MS32).